Consider the following 338-residue polypeptide: GTPase Obg (338 aa).

The Obg domain occupies 1–159 (MQFIDEVKIH…RWLRLELKLM (159 aa)). The tract at residues 66–91 (KAGRGKNGMGKDRHGANGDDLTIPVP) is disordered. In terms of domain architecture, OBG-type G spans 160 to 331 (ADVGLLGFPN…LLDEIARHLW (172 aa)). Residues 166–173 (GFPNVGKS), 191–195 (FTTIK), 213–216 (DIPG), 283–286 (NKID), and 312–314 (SAA) each bind GTP. Positions 173 and 193 each coordinate Mg(2+).

It belongs to the TRAFAC class OBG-HflX-like GTPase superfamily. OBG GTPase family. As to quaternary structure, monomer. Mg(2+) serves as cofactor.

Its subcellular location is the cytoplasm. An essential GTPase which binds GTP, GDP and possibly (p)ppGpp with moderate affinity, with high nucleotide exchange rates and a fairly low GTP hydrolysis rate. Plays a role in control of the cell cycle, stress response, ribosome biogenesis and in those bacteria that undergo differentiation, in morphogenesis control. The protein is GTPase Obg of Geobacter metallireducens (strain ATCC 53774 / DSM 7210 / GS-15).